Consider the following 626-residue polypeptide: PEX5-related protein (626 aa).

Disordered regions lie at residues 1–20 (MYQG…LSSD), 118–167 (VSQT…SSLD), and 181–235 (KFHG…ASEL). Basic and acidic residues predominate over residues 181–198 (KFHGDRNTKGHPMAERKS). S205 is subject to Phosphoserine. Residues 225–235 (SALNSESASEL) are compositionally biased toward low complexity. A phosphoserine mark is found at S253, S257, and S261. 3 TPR repeats span residues 326-359 (WPGA…DPGD), 360-393 (AEAW…QPNN), and 395-427 (KALM…NPKY). A phosphoserine mark is found at S445 and S447. 3 TPR repeats span residues 474-507 (PDLQ…RPED), 509-541 (SLWN…QPGF), and 543-575 (RSRY…QRKS).

This sequence belongs to the peroxisomal targeting signal receptor family. As to quaternary structure, interacts with RAB8B. Forms an obligate 4:4 complex with HCN2. May interact with the C-terminal PTS1-type tripeptide peroxisomal targeting signal (SKL-type); the relevance of such interaction is however unclear. Interacts with HCN3. Interacts with HCN4 with a 4:4 HCN4:PEX5L stoichiometry; reduces the effects of cAMP on the voltage-dependence and rate of activation of HCN4. In terms of tissue distribution, mainly expressed in brain. Also expressed in pancreas, testis and pituitary.

It localises to the cytoplasm. The protein localises to the membrane. Its function is as follows. Accessory subunit of hyperpolarization-activated cyclic nucleotide-gated (HCN) channels, regulating their cell-surface expression and cyclic nucleotide dependence. The chain is PEX5-related protein (PEX5L) from Homo sapiens (Human).